A 139-amino-acid chain; its full sequence is uncharacterized protein (139 aa).

2 helical membrane passes run 35 to 55 and 119 to 139; these read AYFK…AAAA and CCLF…VFCV.

Its subcellular location is the membrane. This is an uncharacterized protein from Saccharomyces cerevisiae (strain ATCC 204508 / S288c) (Baker's yeast).